The chain runs to 439 residues: Xylose isomerase (439 aa).

Catalysis depends on residues histidine 101 and aspartate 104. Residues glutamate 232, glutamate 268, histidine 271, aspartate 296, aspartate 307, aspartate 309, and aspartate 339 each contribute to the Mg(2+) site.

It belongs to the xylose isomerase family. As to quaternary structure, homotetramer. Requires Mg(2+) as cofactor.

Its subcellular location is the cytoplasm. The enzyme catalyses alpha-D-xylose = alpha-D-xylulofuranose. The chain is Xylose isomerase (xylA) from Thermoanaerobacterium thermosaccharolyticum (strain ATCC 7956 / DSM 571 / NCIMB 9385 / NCA 3814 / NCTC 13789 / WDCM 00135 / 2032) (Clostridium thermosaccharolyticum).